Here is a 279-residue protein sequence, read N- to C-terminus: Succinate dehydrogenase [ubiquinone] iron-sulfur subunit 1, mitochondrial (279 aa).

A mitochondrion-targeting transit peptide spans 1-28 (MASGLIGRLVGTKPSKLATAARLIPARW). One can recognise a 2Fe-2S ferredoxin-type domain in the interval 52-141 (FQIYRWNPDN…ETTITPLPHM (90 aa)). Residues cysteine 102, cysteine 107, and cysteine 122 each contribute to the [2Fe-2S] cluster site. The region spanning 184–214 (DRAKLDGMYECILCACCSTSCPSYWWNPESY) is the 4Fe-4S ferredoxin-type domain. [4Fe-4S] cluster-binding residues include cysteine 194, cysteine 197, and cysteine 200. Cysteine 204 serves as a coordination point for [3Fe-4S] cluster. A ubiquinone is bound at residue tryptophan 209. [3Fe-4S] cluster is bound by residues cysteine 251 and cysteine 257. Residue cysteine 261 participates in [4Fe-4S] cluster binding.

It belongs to the succinate dehydrogenase/fumarate reductase iron-sulfur protein family. As to quaternary structure, component of complex II composed of eight subunits in plants: four classical SDH subunits SDH1, SDH2, SDH3 and SDH4 (a flavoprotein (FP), an iron-sulfur protein (IP), and a cytochrome b composed of a large and a small subunit.), as well as four subunits unknown in mitochondria from bacteria and heterotrophic eukaryotes. [2Fe-2S] cluster serves as cofactor. [3Fe-4S] cluster is required as a cofactor. The cofactor is [4Fe-4S] cluster. As to expression, ubiquitous. Preferentially expressed in flowers and inflorescences.

The protein resides in the mitochondrion inner membrane. It carries out the reaction a quinone + succinate = fumarate + a quinol. The protein operates within carbohydrate metabolism; tricarboxylic acid cycle; fumarate from succinate (eukaryal route): step 1/1. Iron-sulfur protein (IP) subunit of succinate dehydrogenase (SDH) that is involved in complex II of the mitochondrial electron transport chain and is responsible for transferring electrons from succinate to ubiquinone (coenzyme Q). This is Succinate dehydrogenase [ubiquinone] iron-sulfur subunit 1, mitochondrial (SDH2-1) from Arabidopsis thaliana (Mouse-ear cress).